A 649-amino-acid chain; its full sequence is MMNQSQRMAPVGSDKELSDLLDFSMMFPLPVANGKGRPASLAGTQFAGSGLEDRPSSESWGNSEQNSSSFDPSRAYSEGAHFSDSHSSLPPSTFLGAGLGGKGSERNAYATFGRDTSVGTLSQAGFLPGELGLSSPGPLSPSGVKSSSQYYTSFPSNPRRRAADGGLDTQPKKVRKVPPGLPSSVYPSSSGDNYSRDATAYPSAKTPSSAYPSPFYVADGSLHPSAELWSPPGQVGFGPMLGDGSAPLPLAPGSSSVSSGAFGGLQQQDRMGYQLHGSEVNGTLPAVSSFSAAPGTYSGTSGHTPPVSGADSLLGTRGTTASSSGDALGKALASIYSPDHSSNNFSPSPSTPVGSPQGLPGTSQWPRAGAPSALSPNYDAGLHGLSKMEDRLDEAIHVLRSHAVGTASELHGLLPGHSTLTTSFAGPMSLGGRHAGLVSGSHPEDGLTSGASLLHNHASLPSQPSSLPDLSQRPPDSFSGLGRAGVTAGASEIKREEKEDEEVTSVADAEEDKKDLKVPRTRTSPDEDEDDLLPPEQKAEREKERRVANNARERLRVRDINEAFKELGRMCQLHLSTEKPQTKLLILHQAVAVILSLEQQVRERNLNPKAACLKRREEEKVSGVVGDPQLALSAAHPGLGEAHNPAGHL.

4 disordered regions span residues 37–107, 132–207, 296–325, and 339–376; these read RPAS…SERN, GLSS…AKTP, TYSG…SSSG, and DHSS…ALSP. Residues 57–71 show a composition bias toward polar residues; it reads SESWGNSEQNSSSFD. Over residues 132–148 the composition is skewed to low complexity; it reads GLSSPGPLSPSGVKSSS. A phosphoserine mark is found at Ser-135 and Ser-140. Positions 171–177 match the Nuclear localization signal motif; it reads PKKVRKV. Residues 339–352 show a composition bias toward low complexity; sequence DHSSNNFSPSPSTP. Position 351 is a phosphothreonine (Thr-351). Ser-355 bears the Phosphoserine mark. Arg-367 carries the omega-N-methylarginine modification. Position 375 is a phosphoserine (Ser-375). A leucine-zipper region spans residues 385–420; sequence LSKMEDRLDEAIHVLRSHAVGTASELHGLLPGHSTL. Positions 435–547 are disordered; the sequence is AGLVSGSHPE…KAEREKERRV (113 aa). Over residues 459–477 the composition is skewed to low complexity; it reads SLPSQPSSLPDLSQRPPDS. Residue Lys-494 forms a Glycyl lysine isopeptide (Lys-Gly) (interchain with G-Cter in SUMO2) linkage. Ser-524 is subject to Phosphoserine. Asp-526 carries the post-translational modification Phosphothreonine. Residues 537 to 547 are compositionally biased toward basic and acidic residues; that stretch reads QKAEREKERRV. Positions 544–597 constitute a bHLH domain; that stretch reads ERRVANNARERLRVRDINEAFKELGRMCQLHLSTEKPQTKLLILHQAVAVILSL. Residue Lys-620 forms a Glycyl lysine isopeptide (Lys-Gly) (interchain with G-Cter in SUMO2) linkage.

As to quaternary structure, homodimer. Heterodimer; efficient DNA binding requires dimerization with another bHLH protein. Forms a heterodimer with TWIST1 and TWIST2. Forms a heterodimer with NEUROD1; the heterodimer is inhibited in presence of ID2, but not NR0B2, to E-box element. Forms a heterodimer with TCF15; the heterodimer binds E-box element. Forms a heterodimer with MYOG; heterodimerization enhances MYOG DNA-binding and transcriptional activities. Forms a heterodimer with ATOH8; repress transcription of TCF3 and TCF3-NEUROG3 dimer-induced transactivation of E box-dependent promoters. Component of a nuclear TAL-1 complex composed at least of CBFA2T3, LDB1, TAL1 and TCF3. Interacts with NEUROD2. Interacts with EP300. Interacts with PTF1A, TGFB1I1. Interacts with UBE2I. Interacts with BHLHA9. Interacts with ASB2; the interaction is mediated by SKP2 and targets TCF3 for Notch-induced proteasomal degradation. Interacts with transcription factor ASCL5/AmeloD. In terms of assembly, interacts with RALGAPA1. Interacts with FIGLA. Forms a heterodimer with ATOH7; required for ATOH7 DNA-binding. Post-translationally, phosphorylated following NGF stimulation. In terms of processing, undergoes Notch-induced ubiquitination and subsequent proteasomal degradation which is mediated by ASB1 or ASB2, the substrate-recognition components of probable ECS E3 ubiquitin-protein ligase complexes.

It localises to the nucleus. Functionally, transcriptional regulator involved in the initiation of neuronal differentiation and mesenchymal to epithelial transition. Heterodimers between TCF3 and tissue-specific basic helix-loop-helix (bHLH) proteins play major roles in determining tissue-specific cell fate during embryogenesis, like muscle or early B-cell differentiation. Together with TCF15, required for the mesenchymal to epithelial transition. Dimers bind DNA on E-box motifs: 5'-CANNTG-3'. Binds to the kappa-E2 site in the kappa immunoglobulin gene enhancer. Binds to the consensus sequence CAC/GCTGT/C present, in the chymotrypsin, insulin, AP-4, and several other gene enhancer motifs. In terms of biological role, facilitates ATOH7 binding to DNA at the consensus sequence 5'-CAGGTG-3', and positively regulates transcriptional activity. In Rattus norvegicus (Rat), this protein is Transcription factor E2-alpha (Tcf3).